A 324-amino-acid polypeptide reads, in one-letter code: Acetyl-coenzyme A carboxylase carboxyl transferase subunit beta (324 aa).

The CoA carboxyltransferase N-terminal domain maps to 28–297 (LWCKCPSCNA…AVAPAAAKAP (270 aa)). Cysteine 32, cysteine 35, cysteine 51, and cysteine 54 together coordinate Zn(2+). A C4-type zinc finger spans residues 32–54 (CPSCNAILYKSEVERNLEVCPKC).

This sequence belongs to the AccD/PCCB family. As to quaternary structure, acetyl-CoA carboxylase is a heterohexamer composed of biotin carboxyl carrier protein (AccB), biotin carboxylase (AccC) and two subunits each of ACCase subunit alpha (AccA) and ACCase subunit beta (AccD). Requires Zn(2+) as cofactor.

It is found in the cytoplasm. It carries out the reaction N(6)-carboxybiotinyl-L-lysyl-[protein] + acetyl-CoA = N(6)-biotinyl-L-lysyl-[protein] + malonyl-CoA. The protein operates within lipid metabolism; malonyl-CoA biosynthesis; malonyl-CoA from acetyl-CoA: step 1/1. Component of the acetyl coenzyme A carboxylase (ACC) complex. Biotin carboxylase (BC) catalyzes the carboxylation of biotin on its carrier protein (BCCP) and then the CO(2) group is transferred by the transcarboxylase to acetyl-CoA to form malonyl-CoA. In Methylococcus capsulatus (strain ATCC 33009 / NCIMB 11132 / Bath), this protein is Acetyl-coenzyme A carboxylase carboxyl transferase subunit beta.